The primary structure comprises 267 residues: Putative phosphoenolpyruvate synthase regulatory protein (267 aa).

Position 147-154 (Gly-147–Thr-154) interacts with ADP.

This sequence belongs to the pyruvate, phosphate/water dikinase regulatory protein family. PSRP subfamily.

The enzyme catalyses [pyruvate, water dikinase] + ADP = [pyruvate, water dikinase]-phosphate + AMP + H(+). It catalyses the reaction [pyruvate, water dikinase]-phosphate + phosphate + H(+) = [pyruvate, water dikinase] + diphosphate. In terms of biological role, bifunctional serine/threonine kinase and phosphorylase involved in the regulation of the phosphoenolpyruvate synthase (PEPS) by catalyzing its phosphorylation/dephosphorylation. This is Putative phosphoenolpyruvate synthase regulatory protein from Cupriavidus necator (strain ATCC 17699 / DSM 428 / KCTC 22496 / NCIMB 10442 / H16 / Stanier 337) (Ralstonia eutropha).